We begin with the raw amino-acid sequence, 168 residues long: Large ribosomal subunit protein uL10 (168 aa).

The protein belongs to the universal ribosomal protein uL10 family. In terms of assembly, part of the ribosomal stalk of the 50S ribosomal subunit. The N-terminus interacts with L11 and the large rRNA to form the base of the stalk. The C-terminus forms an elongated spine to which L12 dimers bind in a sequential fashion forming a multimeric L10(L12)X complex.

In terms of biological role, forms part of the ribosomal stalk, playing a central role in the interaction of the ribosome with GTP-bound translation factors. The protein is Large ribosomal subunit protein uL10 (rplJ) of Mycoplasmopsis pulmonis (strain UAB CTIP) (Mycoplasma pulmonis).